Here is a 501-residue protein sequence, read N- to C-terminus: Glycerol kinase (501 aa).

T11 is a binding site for ADP. Residues T11, T12, and S13 each contribute to the ATP site. T11 is a sn-glycerol 3-phosphate binding site. R15 serves as a coordination point for ADP. 4 residues coordinate sn-glycerol 3-phosphate: R81, E82, Y133, and D242. R81, E82, Y133, D242, and Q243 together coordinate glycerol. 2 residues coordinate ADP: T264 and G307. The ATP site is built by T264, G307, Q311, and G409. ADP contacts are provided by G409 and N413.

The protein belongs to the FGGY kinase family.

The catalysed reaction is glycerol + ATP = sn-glycerol 3-phosphate + ADP + H(+). It functions in the pathway polyol metabolism; glycerol degradation via glycerol kinase pathway; sn-glycerol 3-phosphate from glycerol: step 1/1. With respect to regulation, inhibited by fructose 1,6-bisphosphate (FBP). In terms of biological role, key enzyme in the regulation of glycerol uptake and metabolism. Catalyzes the phosphorylation of glycerol to yield sn-glycerol 3-phosphate. The polypeptide is Glycerol kinase (Borrelia garinii subsp. bavariensis (strain ATCC BAA-2496 / DSM 23469 / PBi) (Borreliella bavariensis)).